The following is a 576-amino-acid chain: Arginine--tRNA ligase (576 aa).

The 'HIGH' region signature appears at 126–136 (ANPTGPMHIGH).

The protein belongs to the class-I aminoacyl-tRNA synthetase family. In terms of assembly, monomer.

The protein localises to the cytoplasm. The catalysed reaction is tRNA(Arg) + L-arginine + ATP = L-arginyl-tRNA(Arg) + AMP + diphosphate. This chain is Arginine--tRNA ligase, found in Rickettsia akari (strain Hartford).